Here is a 95-residue protein sequence, read N- to C-terminus: Protein TusB (95 aa).

The protein belongs to the DsrH/TusB family. Heterohexamer, formed by a dimer of trimers. The hexameric TusBCD complex contains 2 copies each of TusB, TusC and TusD. The TusBCD complex interacts with TusE.

It localises to the cytoplasm. Its function is as follows. Part of a sulfur-relay system required for 2-thiolation of 5-methylaminomethyl-2-thiouridine (mnm(5)s(2)U) at tRNA wobble positions. The protein is Protein TusB of Buchnera aphidicola subsp. Schizaphis graminum (strain Sg).